The chain runs to 430 residues: uncharacterized protein (430 aa).

The chain crosses the membrane as a helical span at residues 207 to 223; that stretch reads GETYMFGSANGLQLSIY.

It localises to the host membrane. May play a role in phage assembly. This is an uncharacterized protein from Pseudomonas phage Pf1 (Bacteriophage Pf1).